The following is a 258-amino-acid chain: Snake venom serine protease 3 (258 aa).

The signal sequence occupies residues 1–18; that stretch reads MVLIRVLANLLILQLSYA. Residues 19–24 constitute a propeptide that is removed on maturation; sequence QKSSEL. The 225-residue stretch at 25-249 folds into the Peptidase S1 domain; the sequence is IIGGHPCNIN…YTDWIQSIIA (225 aa). Intrachain disulfides connect cysteine 31/cysteine 163, cysteine 50/cysteine 66, cysteine 98/cysteine 256, cysteine 142/cysteine 210, cysteine 174/cysteine 189, and cysteine 200/cysteine 225. N-linked (GlcNAc...) asparagine glycosylation is present at asparagine 44. Catalysis depends on charge relay system residues histidine 65 and aspartate 110. The Charge relay system role is filled by serine 204. Asparagine 239 carries an N-linked (GlcNAc...) asparagine glycan.

The protein belongs to the peptidase S1 family. Snake venom subfamily. In terms of assembly, monomer. Expressed by the venom gland.

Its subcellular location is the secreted. Functionally, snake venom serine protease that may act in the hemostasis system of the prey. The sequence is that of Snake venom serine protease 3 from Protobothrops jerdonii (Jerdon's pitviper).